The chain runs to 205 residues: Methylthioribulose-1-phosphate dehydratase (205 aa).

Zn(2+) contacts are provided by His96 and His98.

The protein belongs to the aldolase class II family. MtnB subfamily. It depends on Zn(2+) as a cofactor.

The catalysed reaction is 5-(methylsulfanyl)-D-ribulose 1-phosphate = 5-methylsulfanyl-2,3-dioxopentyl phosphate + H2O. Its pathway is amino-acid biosynthesis; L-methionine biosynthesis via salvage pathway; L-methionine from S-methyl-5-thio-alpha-D-ribose 1-phosphate: step 2/6. Catalyzes the dehydration of methylthioribulose-1-phosphate (MTRu-1-P) into 2,3-diketo-5-methylthiopentyl-1-phosphate (DK-MTP-1-P). This is Methylthioribulose-1-phosphate dehydratase from Pseudomonas aeruginosa (strain LESB58).